A 143-amino-acid polypeptide reads, in one-letter code: 16 kDa calcium-binding protein (143 aa).

4 EF-hand domains span residues 2-37, 41-71, 73-108, and 109-143; these read SEEK…VGVC, ADKI…LPPR, KCVA…SGMD, and IDQN…QTYK. 19 residues coordinate Ca(2+): aspartate 15, aspartate 17, asparagine 19, glutamate 26, aspartate 49, asparagine 51, aspartate 53, lysine 55, glutamate 60, aspartate 86, aspartate 88, serine 90, lysine 92, glutamate 97, aspartate 122, asparagine 124, aspartate 126, glutamate 128, and glutamate 133.

As to expression, found in eggs.

Functionally, calcium-binding protein. The polypeptide is 16 kDa calcium-binding protein (Schistosoma mansoni (Blood fluke)).